The following is a 452-amino-acid chain: 23S rRNA (uracil(1939)-C(5))-methyltransferase RlmD (452 aa).

A disordered region spans residues 1–25; the sequence is MSKKKSNSGLRFQPAGGNRTPQVPV. Residues 22 to 80 form the TRAM domain; the sequence is QVPVGKKQRLDIERLAGDGRGIAFLDGRTWFVSGALAGEAVEARVLNARGKVVEARLER. [4Fe-4S] cluster is bound by residues Cys-93, Cys-99, Cys-102, and Cys-181. Residues Gln-285, Phe-314, Asn-319, Glu-335, Asp-362, and Asp-383 each contribute to the S-adenosyl-L-methionine site. Cys-409 functions as the Nucleophile in the catalytic mechanism.

This sequence belongs to the class I-like SAM-binding methyltransferase superfamily. RNA M5U methyltransferase family. RlmD subfamily.

It carries out the reaction uridine(1939) in 23S rRNA + S-adenosyl-L-methionine = 5-methyluridine(1939) in 23S rRNA + S-adenosyl-L-homocysteine + H(+). In terms of biological role, catalyzes the formation of 5-methyl-uridine at position 1939 (m5U1939) in 23S rRNA. In Pseudomonas putida (strain ATCC 47054 / DSM 6125 / CFBP 8728 / NCIMB 11950 / KT2440), this protein is 23S rRNA (uracil(1939)-C(5))-methyltransferase RlmD.